Here is a 266-residue protein sequence, read N- to C-terminus: Thymidylate synthase (266 aa).

Residues Arg21 and 127-128 (RR) each bind dUMP. The Nucleophile role is filled by Cys147. DUMP is bound by residues 168 to 171 (RSAD), Asn179, and 209 to 211 (HIY). (6R)-5,10-methylene-5,6,7,8-tetrahydrofolate is bound at residue Asp171. Residue Ala265 participates in (6R)-5,10-methylene-5,6,7,8-tetrahydrofolate binding.

This sequence belongs to the thymidylate synthase family. Bacterial-type ThyA subfamily. As to quaternary structure, homodimer.

It localises to the cytoplasm. It carries out the reaction dUMP + (6R)-5,10-methylene-5,6,7,8-tetrahydrofolate = 7,8-dihydrofolate + dTMP. Its pathway is pyrimidine metabolism; dTTP biosynthesis. Catalyzes the reductive methylation of 2'-deoxyuridine-5'-monophosphate (dUMP) to 2'-deoxythymidine-5'-monophosphate (dTMP) while utilizing 5,10-methylenetetrahydrofolate (mTHF) as the methyl donor and reductant in the reaction, yielding dihydrofolate (DHF) as a by-product. This enzymatic reaction provides an intracellular de novo source of dTMP, an essential precursor for DNA biosynthesis. This is Thymidylate synthase from Brachyspira hyodysenteriae (strain ATCC 49526 / WA1).